The following is a 337-amino-acid chain: Heat-inducible transcription repressor HrcA (337 aa).

Belongs to the HrcA family.

In terms of biological role, negative regulator of class I heat shock genes (grpE-dnaK-dnaJ and groELS operons). Prevents heat-shock induction of these operons. The protein is Heat-inducible transcription repressor HrcA of Arthrobacter sp. (strain FB24).